An 841-amino-acid polypeptide reads, in one-letter code: Alpha-glucan phosphorylase 2, cytosolic (841 aa).

The interval 1–24 is disordered; sequence MANANGKAATSLPEKISAKANPEA. Lys687 is subject to N6-(pyridoxal phosphate)lysine.

The protein belongs to the glycogen phosphorylase family. Pyridoxal 5'-phosphate is required as a cofactor.

It localises to the cytoplasm. The enzyme catalyses [(1-&gt;4)-alpha-D-glucosyl](n) + phosphate = [(1-&gt;4)-alpha-D-glucosyl](n-1) + alpha-D-glucose 1-phosphate. In terms of biological role, phosphorylase is an important allosteric enzyme in carbohydrate metabolism. Enzymes from different sources differ in their regulatory mechanisms and in their natural substrates. However, all known phosphorylases share catalytic and structural properties. This Arabidopsis thaliana (Mouse-ear cress) protein is Alpha-glucan phosphorylase 2, cytosolic (PHS2).